Consider the following 612-residue polypeptide: Sulfite reductase [NADPH] hemoprotein beta-component (612 aa).

The segment at 1-32 is disordered; it reads MDDHKPIDTPDGPAVDTPGIGAHRYEAPPTDR. [4Fe-4S] cluster is bound by residues Cys469, Cys475, Cys514, and Cys518. A siroheme-binding site is contributed by Cys518.

This sequence belongs to the nitrite and sulfite reductase 4Fe-4S domain family. As to quaternary structure, alpha(8)-beta(8). The alpha component is a flavoprotein, the beta component is a hemoprotein. Siroheme is required as a cofactor. [4Fe-4S] cluster serves as cofactor.

The catalysed reaction is hydrogen sulfide + 3 NADP(+) + 3 H2O = sulfite + 3 NADPH + 4 H(+). It participates in sulfur metabolism; hydrogen sulfide biosynthesis; hydrogen sulfide from sulfite (NADPH route): step 1/1. In terms of biological role, component of the sulfite reductase complex that catalyzes the 6-electron reduction of sulfite to sulfide. This is one of several activities required for the biosynthesis of L-cysteine from sulfate. This is Sulfite reductase [NADPH] hemoprotein beta-component from Methylorubrum populi (strain ATCC BAA-705 / NCIMB 13946 / BJ001) (Methylobacterium populi).